Reading from the N-terminus, the 193-residue chain is Ion-translocating oxidoreductase complex subunit A (193 aa).

The next 6 membrane-spanning stretches (helical) occupy residues 5–25 (LLLL…FLGL), 39–59 (MGMG…AWAV), 62–82 (FILV…LVIA), 102–122 (LLGI…VALL), 134–154 (AVYG…FAAI), and 171–191 (SIAL…SGLV).

This sequence belongs to the NqrDE/RnfAE family. As to quaternary structure, the complex is composed of six subunits: RnfA, RnfB, RnfC, RnfD, RnfE and RnfG.

It localises to the cell inner membrane. Functionally, part of a membrane-bound complex that couples electron transfer with translocation of ions across the membrane. The protein is Ion-translocating oxidoreductase complex subunit A of Edwardsiella ictaluri (strain 93-146).